The primary structure comprises 222 residues: Ras-related protein Rab-21 (222 aa).

Position 2 is an N-acetylalanine (Ala-2). Gly-25, Gly-28, Lys-29, Thr-30, Ser-31, Asn-42, Asp-43, His-45, Thr-47, and Thr-48 together coordinate GTP. Thr-30 provides a ligand contact to Mg(2+). The short motif at 40–53 (KFNDKHITTLQASF) is the Switch 1 element. Mg(2+) contacts are provided by Thr-48 and Asp-71. The Switch 2 motif lies at 73–91 (AGQERFHALGPIYYRDSNG). Residues Gly-74, Asn-129, Lys-130, Asp-132, Ala-160, and Lys-161 each coordinate GTP. S-geranylgeranyl cysteine attachment occurs at residues Cys-218 and Cys-219. A Cysteine methyl ester modification is found at Cys-219. A propeptide spans 220 to 222 (SSG) (removed in mature form).

The protein belongs to the small GTPase superfamily. Rab family. Interacts with the cytoplasmic tail of integrins ITGA1, ITGA2, ITGA5, ITGA6, ITGA11 and ITGB1; this interaction is dependent upon its GDP/GTP cycle. Interacts with RABGEF1 (via VPS9 domain). Interacts with ANKRD27. Interacts (in GTP-bound form) with VAMP8 in response to starvation; the interaction probably regulates VAMP8 endolysosomal trafficking. Interacts (active GTP-bound form) with TMED10; the interaction is indirect and regulates TMED10 abundance and localization at the Golgi. Mg(2+) is required as a cofactor.

Its subcellular location is the endoplasmic reticulum membrane. It is found in the golgi apparatus. The protein resides in the trans-Golgi network. It localises to the golgi apparatus membrane. The protein localises to the early endosome membrane. Its subcellular location is the cytoplasmic vesicle membrane. It is found in the cleavage furrow. The protein resides in the cell projection. It localises to the neuron projection. It carries out the reaction GTP + H2O = GDP + phosphate + H(+). Regulated by guanine nucleotide exchange factors (GEFs) including ANKRD27 and RABGEF1, which promote the exchange of bound GDP for free GTP. Regulated by GTPase activating proteins (GAPs) which increase the GTP hydrolysis activity. Inhibited by GDP dissociation inhibitors (GDIs). In terms of biological role, the small GTPases Rab are key regulators of intracellular membrane trafficking, from the formation of transport vesicles to their fusion with membranes. Rabs cycle between an inactive GDP-bound form and an active GTP-bound form that is able to recruit to membranes different sets of downstream effectors directly responsible for vesicle formation, movement, tethering and fusion. RAB21 is involved in membrane trafficking control. Regulates integrin internalization and recycling, but does not influence the traffic of endosomally translocated receptors in general. As a result, may regulate cell adhesion and migration. During the mitosis of adherent cells, controls the endosomal trafficking of integrins which is required for the successful completion of cytokinesis. Involved in neurite growth. Following SBF2/MTMT13-mediated activation in response to starvation-induced autophagy, binds to and regulates SNARE protein VAMP8 endolysosomal transport required for SNARE-mediated autophagosome-lysosome fusion. Modulates protein levels of the cargo receptors TMED2 and TMED10, and required for appropriate Golgi localization of TMED10. The sequence is that of Ras-related protein Rab-21 (RAB21) from Bos taurus (Bovine).